A 633-amino-acid chain; its full sequence is MAKENSGHHHQTEARRKKLTLILGVSGLCILFYVLGAWQANTVPSSISKLGCETQSNPSSSSSSSSSSESAELDFKSHNQIELKETNQTIKYFEPCELSLSEYTPCEDRQRGRRFDRNMMKYRERHCPVKDELLYCLIPPPPNYKIPFKWPQSRDYAWYDNIPHKELSVEKAVQNWIQVEGDRFRFPGGGTMFPRGADAYIDDIARLIPLTDGGIRTAIDTGCGVASFGAYLLKRDIMAVSFAPRDTHEAQVQFALERGVPAIIGIMGSRRLPYPARAFDLAHCSRCLIPWFKNDGLYLMEVDRVLRPGGYWILSGPPINWKQYWRGWERTEEDLKKEQDSIEDVAKSLCWKKVTEKGDLSIWQKPLNHIECKKLKQNNKSPPICSSDNADSAWYKDLETCITPLPETNNPDDSAGGALEDWPDRAFAVPPRIIRGTIPEMNAEKFREDNEVWKERIAHYKKIVPELSHGRFRNIMDMNAFLGGFAASMLKYPSWVMNVVPVDAEKQTLGVIYERGLIGTYQDWCEGFSTYPRTYDMIHAGGLFSLYEHRCDLTLILLEMDRILRPEGTVVLRDNVETLNKVEKIVKGMKWKSQIVDHEKGPFNPEKILVAVKTYWTGQPSDKNNNNNNNNNN.

The Cytoplasmic segment spans residues Met1–Lys18. A helical; Signal-anchor for type II membrane protein transmembrane segment spans residues Leu19–Gln39. Residues Ala40 to Asn633 are Lumenal-facing. Positions Leu50–Ala71 are disordered. Positions Ser59–Ser70 are enriched in low complexity. A glycan (N-linked (GlcNAc...) asparagine) is linked at Asn87.

The protein belongs to the methyltransferase superfamily.

It localises to the endoplasmic reticulum membrane. This Arabidopsis thaliana (Mouse-ear cress) protein is Probable methyltransferase PMT17.